Here is a 457-residue protein sequence, read N- to C-terminus: COBRA-like protein 3 (457 aa).

Residues 1–35 (MAVGGAGSSRSVAPCCCCAVLLAAALLFSAPATTE) form the signal peptide. 9 N-linked (GlcNAc...) asparagine glycosylation sites follow: Asn45, Asn170, Asn178, Asn217, Asn242, Asn258, Asn326, Asn341, and Asn361. Residue Asn430 is the site of GPI-anchor amidated asparagine attachment. Positions 431–457 (ASPLTKQPLTLSVLVFSIVLATLLAYA) are cleaved as a propeptide — removed in mature form. A helical transmembrane segment spans residues 437–457 (QPLTLSVLVFSIVLATLLAYA).

It belongs to the COBRA family.

The protein resides in the cell membrane. Involved in determining the orientation of cell expansion, probably by playing an important role in cellulose deposition. May act by recruiting cellulose synthesizing complexes to discrete positions on the cell surface. This is COBRA-like protein 3 (BC1L4) from Oryza sativa subsp. japonica (Rice).